We begin with the raw amino-acid sequence, 382 residues long: MQTTCEICEVPAHGIHFGAITCRGCAAFFRRAVNTKTNRKSCKYSSNCTNFTGKFPQCKSCRMRKCIKMGMMPEKVKVMQPISQSLEIFVSRPNLILFTNNYDKTRNYIDVSNLITRGLEILKQGFPTPLGIGKTNLERMASGVEFSTAESKIVDVVTGKSVSMVWEFDFISTAKWLTRLQDFCTLPMRIQMQLLQTIWHVWSRMYKVVKSSELRKKHADSSNLFQVLDQFHVNLGTTKLDVSWLTTYSYEEIKYFLYGIDDDIYLQSAITAASKLELTDVELTYMAAQTCFQYAQNRFAGTEIAEVCAKFQEILANDLHTYYTKDHKRTSNYAGKLSQMLKCVQEIQKSIRTTRERTTIARTFDIYITDFSNPEMFIDSGC.

Residues 2–78 (QTTCEICEVP…MGMMPEKVKV (77 aa)) constitute a DNA-binding region (nuclear receptor). 2 consecutive NR C4-type zinc fingers follow at residues 5–25 (CEIC…CRGC) and 42–61 (CKYS…CKSC). Residues 110–380 (DVSNLITRGL…FSNPEMFIDS (271 aa)) form the NR LBD domain.

This sequence belongs to the nuclear hormone receptor family.

The protein localises to the nucleus. Its function is as follows. Orphan nuclear receptor. The protein is Nuclear hormone receptor family member nhr-106 (nhr-106) of Caenorhabditis elegans.